Consider the following 874-residue polypeptide: MEDKNKTIKETLQGSADAGKRKKLIIKKKGDDPSTPSPAASPKKETVAESAPSSKPPVMPLPLPGDSGQSPIVRPAPSSHSPAKREESPGKQDAGRPPRDKDTRQGGGSSYPPSRSPFQKEDSNIIVSRPIQRTGPSRPNSGGGYQGNRGPGQGGGGYQGNRGPGQGGGGYQGNRGPGQGGGGYQGNRGPGQGGGGYQGNRGPGQGGGGYQGNRGPRSGGTGTRPMPITSAEVELSQSRGSSVTSKKKGHDKEKSTSDRDFSGAENTKFFKQKFKKTKVVGVSGVSVPKEITLLENVQVGELAKKMNLKPGDVIGKLMKMGMMVTINNIIDAETAALLADEYGCKVKVVSLYEETIIEEEKDNQEDYINRPPVVTIMGHVDHGKTKLLDTIRRSSVIDTESGGITQHIGAYQVRTARGLITFLDTPGHEAFTSMRARGAKVTDIVVLVVAADDGVMPQTLEAISHAKAAEVPILVAINKIDLPAANPEKIMQELANHGLQSEEWGGETMYAKISARENIGIDKLLEMILLQAEVMDLKANPKRRAKGTIIEAKLDPGRGSVATVLIQNGTLRVGDPFVAGVFSGRVRAMYNDLGQLIQEAGPAFPAQVTGIDGVPDAGAPFDAMADEKEARNISQHRIEFERIGNAGAATGTSSKVTLENMNEFIKQGALKELKVIIKADVRGSAEAIKESLEKLSTPEVKLNVIQSGAGAIVDMDVMLASASNALIIGFHVRANPKTIALAEKEGVQIKYYNIIYQVVDEIKLAMEGLLEPEKIEEVIGTAEIREIFKVSKIGNIAGCMVLSGKIQKSANIRVIGDGVTKFEGKLKSLKRVKDDVNDVVAGFECGIQVDGYNDFKVGDTIEAYNVTVIKRKLE.

The disordered stretch occupies residues 1 to 262 (MEDKNKTIKE…EKSTSDRDFS (262 aa)). A compositionally biased stretch (pro residues) spans 54–63 (SKPPVMPLPL). Basic and acidic residues predominate over residues 83-104 (AKREESPGKQDAGRPPRDKDTR). The span at 141–222 (SGGGYQGNRG…NRGPRSGGTG (82 aa)) shows a compositional bias: gly residues. Positions 235–244 (LSQSRGSSVT) are enriched in polar residues. The span at 250–262 (HDKEKSTSDRDFS) shows a compositional bias: basic and acidic residues. One can recognise a tr-type G domain in the interval 369-538 (NRPPVVTIMG…LLQAEVMDLK (170 aa)). The interval 378–385 (GHVDHGKT) is G1. Position 378–385 (378–385 (GHVDHGKT)) interacts with GTP. The tract at residues 403–407 (GITQH) is G2. The segment at 424 to 427 (DTPG) is G3. GTP-binding positions include 424-428 (DTPGH) and 478-481 (NKID). The interval 478-481 (NKID) is G4. The segment at 514 to 516 (SAR) is G5.

This sequence belongs to the TRAFAC class translation factor GTPase superfamily. Classic translation factor GTPase family. IF-2 subfamily.

The protein resides in the cytoplasm. One of the essential components for the initiation of protein synthesis. Protects formylmethionyl-tRNA from spontaneous hydrolysis and promotes its binding to the 30S ribosomal subunits. Also involved in the hydrolysis of GTP during the formation of the 70S ribosomal complex. The polypeptide is Translation initiation factor IF-2 (Leptospira interrogans serogroup Icterohaemorrhagiae serovar copenhageni (strain Fiocruz L1-130)).